Consider the following 85-residue polypeptide: Delta/kappa-theraphotoxin-Pm1a (85 aa).

The N-terminal stretch at 1–19 (MKTFVFIVLVALAFVLTAA) is a signal peptide. Residues 20–43 (KEERANPSELVSALAELVMLDAER) constitute a propeptide that is removed on maturation. Intrachain disulfides connect Cys-50–Cys-64, Cys-57–Cys-69, and Cys-63–Cys-77.

Belongs to the neurotoxin 10 (Hwtx-1) family. In terms of tissue distribution, expressed by the venom gland.

It localises to the secreted. Functionally, multimodal toxin that enhances nociceptor excitability mainly by the simultaneous stimulation of repetitive firing (through Nav1.8/SCN10A channel current enhancement) and impairment of repolarization (by inhibiting delayed rectifier current of Kv2.1/KCNB1), with a potential contribution from tetrodotoxin-sensitive voltage-gated sodium channels (Nav) modified excitability. Enhances Nav1.8/SCN10A currents (EC(50)=1.1 uM), modifies the channel gating by a right-shift in steady-state inactivation and delays open-state inactivation. Also decreases Kv2.1/KCNB1 currents (IC(50)=0.43 uM) and causes a depolarizing shift in the voltage dependence of activation without change in steady-state inactivation. In addition, inhibits peak currents of human sodium channels (Nav1.1 to Nav1.7, IC(50)=0.38-2.3 uM) and delays fast inactivation of Nav1.1/SCN1A, Nav1.3/SCN3A, Nav1.6/SCN8A, and Nav1.7/SCN9A. In small dorsal root ganglion neurons, induces hyperexcitability by enhancing tetrodotoxin-resistant sodium currents, impairing repolarization and lowering the threshold of action potential firing, consistent with the severe pain associated with envenomation. In vivo, elicits nocifensive behavior in mice after intraplantar injection. This chain is Delta/kappa-theraphotoxin-Pm1a, found in Pelinobius muticus (King baboon spider).